Reading from the N-terminus, the 186-residue chain is Large ribosomal subunit protein uL22 (186 aa).

The protein belongs to the universal ribosomal protein uL22 family. Component of the large ribosomal subunit (LSU). Mature N.crassa ribosomes consist of a small (40S) and a large (60S) subunit. The 40S small subunit contains 1 molecule of ribosomal RNA (18S rRNA) and at least 32 different proteins. The large 60S subunit contains 3 rRNA molecules (26S, 5.8S and 5S rRNA) and at least 42 different proteins.

The protein resides in the cytoplasm. In terms of biological role, component of the ribosome, a large ribonucleoprotein complex responsible for the synthesis of proteins in the cell. The small ribosomal subunit (SSU) binds messenger RNAs (mRNAs) and translates the encoded message by selecting cognate aminoacyl-transfer RNA (tRNA) molecules. The large subunit (LSU) contains the ribosomal catalytic site termed the peptidyl transferase center (PTC), which catalyzes the formation of peptide bonds, thereby polymerizing the amino acids delivered by tRNAs into a polypeptide chain. The nascent polypeptides leave the ribosome through a tunnel in the LSU and interact with protein factors that function in enzymatic processing, targeting, and the membrane insertion of nascent chains at the exit of the ribosomal tunnel. The protein is Large ribosomal subunit protein uL22 (rpl-17) of Neurospora crassa (strain ATCC 24698 / 74-OR23-1A / CBS 708.71 / DSM 1257 / FGSC 987).